The following is a 738-amino-acid chain: Polyribonucleotide nucleotidyltransferase (738 aa).

Positions 487 and 493 each coordinate Mg(2+). Residues 554-613 (PKIVTMTINPDKIRDVIGPGGKMINSIIDQTGVKIDIEQDGTVFIASTDQEGIDLAMSMI) enclose the KH domain. The 69-residue stretch at 623–691 (GEVYDATVRR…DKGRVNASRK (69 aa)) folds into the S1 motif domain. The tract at residues 704–738 (EAYEAKRKAARESRPPRDSRPPRRDGDRRPPRSTN) is disordered.

The protein belongs to the polyribonucleotide nucleotidyltransferase family. Mg(2+) serves as cofactor.

It is found in the cytoplasm. It catalyses the reaction RNA(n+1) + phosphate = RNA(n) + a ribonucleoside 5'-diphosphate. Functionally, involved in mRNA degradation. Catalyzes the phosphorolysis of single-stranded polyribonucleotides processively in the 3'- to 5'-direction. The polypeptide is Polyribonucleotide nucleotidyltransferase (Exiguobacterium sp. (strain ATCC BAA-1283 / AT1b)).